A 303-amino-acid polypeptide reads, in one-letter code: Probable 5-dehydro-4-deoxyglucarate dehydratase (303 aa).

This sequence belongs to the DapA family.

The enzyme catalyses 5-dehydro-4-deoxy-D-glucarate + H(+) = 2,5-dioxopentanoate + CO2 + H2O. The protein operates within carbohydrate acid metabolism; D-glucarate degradation; 2,5-dioxopentanoate from D-glucarate: step 2/2. This is Probable 5-dehydro-4-deoxyglucarate dehydratase from Ectopseudomonas mendocina (strain ymp) (Pseudomonas mendocina).